We begin with the raw amino-acid sequence, 502 residues long: Type II secretion system protein E (502 aa).

263-270 (GPTGSGKT) serves as a coordination point for ATP. Positions 396, 399, 429, and 432 each coordinate Zn(2+). The tract at residues 461-480 (SSEQEMTRHARTSGPSIRDD) is disordered.

The protein belongs to the GSP E family. As to quaternary structure, homodimer. Dimerization is directed by a relatively short domain near the extreme N-terminus and is essential for extracellular protein secretion. May form homooligomers. Interacts with XcpY/GspL. Forms an inner membrane platform subcomplex with XcpS/GspF, XcpY/GspL and XcpZ/GspM. The cofactor is Zn(2+).

Its subcellular location is the cell inner membrane. The catalysed reaction is ATP + H2O + cellular proteinSide 1 = ADP + phosphate + cellular proteinSide 2.. In terms of biological role, ATPase component of the type II secretion system required for the energy-dependent secretion of extracellular factors such as proteases and toxins from the periplasm. Acts as a molecular motor to provide the energy that is required for assembly of the pseudopilus and the extrusion of substrates generated in the cytoplasm. The chain is Type II secretion system protein E (xcpR) from Pseudomonas aeruginosa (strain ATCC 15692 / DSM 22644 / CIP 104116 / JCM 14847 / LMG 12228 / 1C / PRS 101 / PAO1).